We begin with the raw amino-acid sequence, 279 residues long: Large ribosomal subunit protein uL2 (279 aa).

Disordered stretches follow at residues 33-58 (LLAP…GGGH) and 223-279 (GVAM…RKRG). Composition is skewed to basic residues over residues 40-58 (KGGR…GGGH) and 269-279 (VRRRYATRKRG).

This sequence belongs to the universal ribosomal protein uL2 family. In terms of assembly, part of the 50S ribosomal subunit. Forms a bridge to the 30S subunit in the 70S ribosome.

Its function is as follows. One of the primary rRNA binding proteins. Required for association of the 30S and 50S subunits to form the 70S ribosome, for tRNA binding and peptide bond formation. It has been suggested to have peptidyltransferase activity; this is somewhat controversial. Makes several contacts with the 16S rRNA in the 70S ribosome. The protein is Large ribosomal subunit protein uL2 of Salinispora arenicola (strain CNS-205).